The chain runs to 375 residues: Mitogen-activated protein kinase 4a (375 aa).

The region spanning 39-325 (KPPLRPIGRG…VEAALAHPYL (287 aa)) is the Protein kinase domain. ATP-binding positions include 45–53 (IGRGAYGIV) and Lys68. The Proton acceptor role is filled by Asp165. Thr197 is modified (phosphothreonine). The TXY signature appears at 197–199 (TEY). At Tyr199 the chain carries Phosphotyrosine.

It belongs to the protein kinase superfamily. CMGC Ser/Thr protein kinase family. MAP kinase subfamily. It depends on Mg(2+) as a cofactor. In terms of processing, dually phosphorylated on Thr-197 and Tyr-199, which activates the enzyme. Phosphorylated in response to pathogen-associated molecular pattern (PAMP) chitin and in response to necrotrophic fungus B.cinerea spores. Not phosphorylated in response to osmotic stress. As to expression, expressed strongly in the apical cells of caulonemal air filaments and rhizoids in fully developed plants and less strongly, but readily detectable in filamentous protonemal tissue at the edge of the plant consisting of both chloronema and caulonema. When filamentous growth of protonema is promoted, the expression is strongest in newly formed apical tip cells of protonemal tissue.

It is found in the cytoplasm. The protein resides in the nucleus. The catalysed reaction is L-seryl-[protein] + ATP = O-phospho-L-seryl-[protein] + ADP + H(+). It catalyses the reaction L-threonyl-[protein] + ATP = O-phospho-L-threonyl-[protein] + ADP + H(+). Activated by threonine and tyrosine phosphorylation. Activated in response to bacterial and fungal pathogen-associated molecular patterns (PAMPs) including chitin, chitosan and peptidyl glycans (PGNs). Activation in response to chitin requires the CERK1, MEKK1a/b, MKK1a/b/c and MPK4a/b signaling pathway. Activated in response to necrotrophic fungus B.cinerea spores. Not activated in response to osmotic stress. The CERK1, MEKK1a/b, MKK1a/b/c and MPK4a/b proteins are involved in pathogen defense. The pathway induces rapid growth inhibition, cell wall depositions and accumulation of defense-related transcripts. This protein is required for innate immunity triggered by pathogen-associated molecular patterns (PAMPs). Involved in resistance to necrotrophic fungi B.cinerea and A.brassicicola. Involved in the transduction of signals from chitosan perception to the activation of defense genes. In Physcomitrium patens (Spreading-leaved earth moss), this protein is Mitogen-activated protein kinase 4a (MPK4a).